A 2439-amino-acid chain; its full sequence is Protein roller-3 (2439 aa).

The signal sequence occupies residues 1–26 (MLDFPRFSLFLFLLFSSFLFSSFVHA). Residues 27-1851 (ATVFSSSLKT…EEEKGGILPY (1825 aa)) lie on the Extracellular side of the membrane. N-linked (GlcNAc...) asparagine glycans are attached at residues N64, N182, N334, N394, N496, N533, N657, N766, N868, N1003, N1036, N1090, and N1261. The Fibronectin type-III 1 domain maps to 618 to 720 (KPRIVAVSSI…STSNTALPDL (103 aa)). Fibronectin type-III domains lie at 1403–1503 (SKGI…TGFG), 1507–1628 (APRD…TLDV), 1629–1732 (PGTL…IQQA), and 1738–1843 (VPTA…EKEE). 4 N-linked (GlcNAc...) asparagine glycosylation sites follow: N1567, N1636, N1677, and N1779. A helical membrane pass occupies residues 1852–1872 (FLGISIILLLAAMILVGCFWL). Over 1873–2439 (KSRRRQQMKK…GGTCRSVSQV (567 aa)) the chain is Cytoplasmic. The region spanning 1928 to 2199 (VEIVRHISDC…ATILKIFETC (272 aa)) is the Protein kinase domain. ATP-binding positions include 1934-1942 (ISDCSYGSV) and K1963. Disordered regions lie at residues 2214-2277 (NEGS…RPAT), 2315-2348 (SQRP…NRTN), and 2412-2439 (HLRA…VSQV). Composition is skewed to polar residues over residues 2216–2233 (GSDN…SSRE), 2334–2347 (ATSS…SNRT), and 2420–2439 (PPTR…VSQV).

Its subcellular location is the membrane. In terms of biological role, involved in larval development and locomotion. The sequence is that of Protein roller-3 from Caenorhabditis briggsae.